The primary structure comprises 389 residues: Na(+)/H(+) antiporter NhaA 1 (389 aa).

12 helical membrane passes run 12-32 (VLNE…ALLV), 62-82 (FLLW…GLEL), 97-117 (IVLP…LFVL), 128-148 (GWAI…MMCG), 157-177 (IFLL…IAIF), 184-204 (IVAF…NILG), 220-240 (ISVL…AFFI), 260-280 (FWLA…VNLS), 282-302 (IDIG…LFVG), 305-325 (AGVF…LPQG), 331-351 (LYGV…IDGL), and 365-385 (LAIL…LKFF).

It belongs to the NhaA Na(+)/H(+) (TC 2.A.33) antiporter family.

The protein resides in the cell inner membrane. It carries out the reaction Na(+)(in) + 2 H(+)(out) = Na(+)(out) + 2 H(+)(in). Functionally, na(+)/H(+) antiporter that extrudes sodium in exchange for external protons. This chain is Na(+)/H(+) antiporter NhaA 1, found in Campylobacter jejuni subsp. jejuni serotype O:23/36 (strain 81-176).